The sequence spans 278 residues: TnpB-like protein MJ0751 (278 aa).

The Zn(2+) site is built by Cys222, Cys225, Cys239, and Cys242.

This sequence in the N-terminal section; belongs to the transposase 2 family. It in the C-terminal section; belongs to the transposase 35 family.

In Methanocaldococcus jannaschii (strain ATCC 43067 / DSM 2661 / JAL-1 / JCM 10045 / NBRC 100440) (Methanococcus jannaschii), this protein is TnpB-like protein MJ0751.